Here is a 173-residue protein sequence, read N- to C-terminus: NADH-quinone oxidoreductase subunit B (173 aa).

[4Fe-4S] cluster-binding residues include Cys-46, Cys-47, Cys-112, and Cys-142.

It belongs to the complex I 20 kDa subunit family. In terms of assembly, NDH-1 is composed of 14 different subunits. Subunits NuoB, C, D, E, F, and G constitute the peripheral sector of the complex. [4Fe-4S] cluster serves as cofactor.

The protein localises to the cell membrane. It carries out the reaction a quinone + NADH + 5 H(+)(in) = a quinol + NAD(+) + 4 H(+)(out). In terms of biological role, NDH-1 shuttles electrons from NADH, via FMN and iron-sulfur (Fe-S) centers, to quinones in the respiratory chain. The immediate electron acceptor for the enzyme in this species is believed to be a menaquinone. Couples the redox reaction to proton translocation (for every two electrons transferred, four hydrogen ions are translocated across the cytoplasmic membrane), and thus conserves the redox energy in a proton gradient. The sequence is that of NADH-quinone oxidoreductase subunit B from Desulfitobacterium hafniense (strain DSM 10664 / DCB-2).